A 287-amino-acid polypeptide reads, in one-letter code: Glycine--tRNA ligase alpha subunit (287 aa).

Belongs to the class-II aminoacyl-tRNA synthetase family. In terms of assembly, tetramer of two alpha and two beta subunits.

It is found in the cytoplasm. It carries out the reaction tRNA(Gly) + glycine + ATP = glycyl-tRNA(Gly) + AMP + diphosphate. This is Glycine--tRNA ligase alpha subunit from Campylobacter curvus (strain 525.92).